We begin with the raw amino-acid sequence, 590 residues long: uncharacterized protein (590 aa).

Disordered stretches follow at residues 306 to 329 (IAEP…GIPY) and 528 to 590 (QPAP…LMNL). A compositionally biased stretch (pro residues) spans 543–563 (PSLPQPVPEPLAPQEPPPPGT).

This is an uncharacterized protein from Ictaluridae (bullhead catfishes).